Consider the following 605-residue polypeptide: Tyrosyl-DNA phosphodiesterase 1 (605 aa).

Positions 81 to 86 (RKKVKP) match the Nuclear localization signal motif. His-236 (nucleophile) is an active-site residue. Substrate is bound at residue Lys-238. Residues 379–382 (SLGS) are interaction with DNA. Residue His-466 is the Proton donor/acceptor of the active site. Residue Lys-468 coordinates substrate.

It belongs to the tyrosyl-DNA phosphodiesterase family. Ubiquitous, with a low level in roots.

The protein localises to the nucleus. Inhibited by vanadate analogs. DNA repair enzyme that can remove a variety of covalent adducts from DNA through hydrolysis of a 3'-phosphodiester bond, giving rise to DNA with a free 3' phosphate. Catalyzes the hydrolysis of dead-end complexes between DNA and the topoisomerase I active site tyrosine residue. This Arabidopsis thaliana (Mouse-ear cress) protein is Tyrosyl-DNA phosphodiesterase 1.